The primary structure comprises 336 residues: F420-dependent glucose-6-phosphate dehydrogenase (336 aa).

Aspartate 39 serves as a coordination point for coenzyme F420-(gamma-Glu)n. The active-site Proton donor is the histidine 40. Coenzyme F420-(gamma-Glu)n contacts are provided by residues threonine 76 and 107–108 (TG). Residue glutamate 109 is the Proton acceptor of the active site. Coenzyme F420-(gamma-Glu)n is bound by residues asparagine 112, 177–178 (GG), and 180–181 (QV). Substrate-binding residues include threonine 195, lysine 198, lysine 259, and arginine 283.

It belongs to the F420-dependent glucose-6-phosphate dehydrogenase family. Homodimer.

It catalyses the reaction oxidized coenzyme F420-(gamma-L-Glu)(n) + D-glucose 6-phosphate + H(+) = 6-phospho-D-glucono-1,5-lactone + reduced coenzyme F420-(gamma-L-Glu)(n). Its function is as follows. Catalyzes the coenzyme F420-dependent oxidation of glucose 6-phosphate (G6P) to 6-phosphogluconolactone. Appears to have a role in resistance to oxidative stress, via its consumption of G6P that serves as a source of reducing power to combat oxidative stress in mycobacteria. The polypeptide is F420-dependent glucose-6-phosphate dehydrogenase (Mycolicibacterium gilvum (strain PYR-GCK) (Mycobacterium gilvum (strain PYR-GCK))).